Here is a 296-residue protein sequence, read N- to C-terminus: Class E basic helix-loop-helix protein 22 (296 aa).

Residues 26 to 70 (SAFRPPQGLDLSQPGDRSPLHCYDGPDPSDLLRHHQHHHQASSGA) form a disordered region. Positions 153–207 (TLRLNINARERRRMHDLNDALDELRAVIPYAHSPSVRKLSKIATLLLAKNYILMQ) constitute a bHLH domain.

It is found in the nucleus. Functionally, may act as a transcriptional repressor. This is Class E basic helix-loop-helix protein 22 (bhlhe22) from Xenopus tropicalis (Western clawed frog).